The chain runs to 676 residues: DNA ligase (676 aa).

Residues 1–10 (MTQAHHDDAG) are compositionally biased toward basic and acidic residues. The disordered stretch occupies residues 1–23 (MTQAHHDDAGARNALQGGLATDP). Residues 52–56 (DAAFD) and 95–96 (SL) contribute to the NAD(+) site. The active-site N6-AMP-lysine intermediate is the lysine 148. The NAD(+) site is built by arginine 169, glutamate 203, and lysine 330. Zn(2+)-binding residues include cysteine 420, cysteine 423, cysteine 436, and cysteine 441. The region spanning 593 to 676 (EAEGPLAGLT…DKLIAERRGG (84 aa)) is the BRCT domain.

This sequence belongs to the NAD-dependent DNA ligase family. LigA subfamily. Mg(2+) serves as cofactor. The cofactor is Mn(2+).

The catalysed reaction is NAD(+) + (deoxyribonucleotide)n-3'-hydroxyl + 5'-phospho-(deoxyribonucleotide)m = (deoxyribonucleotide)n+m + AMP + beta-nicotinamide D-nucleotide.. Functionally, DNA ligase that catalyzes the formation of phosphodiester linkages between 5'-phosphoryl and 3'-hydroxyl groups in double-stranded DNA using NAD as a coenzyme and as the energy source for the reaction. It is essential for DNA replication and repair of damaged DNA. In Sorangium cellulosum (strain So ce56) (Polyangium cellulosum (strain So ce56)), this protein is DNA ligase.